The sequence spans 37 residues: Hemextin B (37 aa).

Heterotetramer composed of 2 hemextin A and 2 hemextin B chains; non-covalently linked. Does not exist as a complex in the crude venom. Post-translationally, may contain several disulfide bonds. In terms of tissue distribution, expressed by the venom gland.

The protein localises to the secreted. Hemextin B (monomer): does not show anticoagulant activity. Seems only to synergitically enhance hemextin A activity. In terms of biological role, hemextin AB complex: specifically inhibits the activation of FX (F10) by the TF-FVIIa complex (extrinsic tenase complex (ETC)) (IC(50)= 100 nM, Ki=50 nM) by non-competitively inhibiting the enzymatic activity of FVIIa. This is Hemextin B from Hemachatus haemachatus (Rinkhals).